A 446-amino-acid polypeptide reads, in one-letter code: Na(+)-translocating NADH-quinone reductase subunit A (446 aa).

Belongs to the NqrA family. Composed of six subunits; NqrA, NqrB, NqrC, NqrD, NqrE and NqrF.

The catalysed reaction is a ubiquinone + n Na(+)(in) + NADH + H(+) = a ubiquinol + n Na(+)(out) + NAD(+). Its function is as follows. NQR complex catalyzes the reduction of ubiquinone-1 to ubiquinol by two successive reactions, coupled with the transport of Na(+) ions from the cytoplasm to the periplasm. NqrA to NqrE are probably involved in the second step, the conversion of ubisemiquinone to ubiquinol. The sequence is that of Na(+)-translocating NADH-quinone reductase subunit A from Histophilus somni (strain 129Pt) (Haemophilus somnus).